Consider the following 796-residue polypeptide: Molybdenum cofactor sulfurase (796 aa).

Position 246 is an N6-(pyridoxal phosphate)lysine (K246). C418 is an active-site residue. The 147-residue stretch at 650-796 (LRLLRQSSQR…LTCGDVVVVT (147 aa)) folds into the MOSC domain. S752 carries the phosphoserine modification.

It belongs to the class-V pyridoxal-phosphate-dependent aminotransferase family. MOCOS subfamily. Pyridoxal 5'-phosphate is required as a cofactor.

It catalyses the reaction Mo-molybdopterin + L-cysteine + AH2 = thio-Mo-molybdopterin + L-alanine + A + H2O. Sulfurates the molybdenum cofactor. Sulfation of molybdenum is essential for xanthine dehydrogenase (XDH) and aldehyde oxidase (ADO) enzymes in which molybdenum cofactor is liganded by 1 oxygen and 1 sulfur atom in active form. The protein is Molybdenum cofactor sulfurase of Drosophila persimilis (Fruit fly).